The following is a 352-amino-acid chain: MSEGIAGSGIELGITLYSLTSEFAAGLYTPETLIKAVADEGLGPGVEFNIAQMLRTYPDVDDDFVKLWRDSMDRYGLTPSAVGTNLDMGRRKDRDMTPDEEYDFFAAQLRTANKLGFHRVVIRSAGKELLRRLLPLAEKYDQKLGYEIHAPQGPNDPKILQIREMYAELGSDRLGFTADFSSTMHSLSPTLFRTLTQMGLPEEHFAVMQDIWRKPLPMQERNQEFEDYLRANNFDPAQLGPFTRLAFNMHGLVPPEEWLDIMPQIFHVHAKFYDIDENGNEPAMDIPRIVRQFVKGGYRGYLSSEWEGHAFADLGESDPIDLVKKQHSLMRRAIEEAVDPTVSQPALVETAK.

A Mn(2+)-binding site is contributed by Glu-147. His-149 acts as the Proton acceptor in catalysis. Mn(2+) contacts are provided by Asp-179, His-269, and Glu-305.

Belongs to the C-glycoside deglycosidase alpha subunit family. As to quaternary structure, heterodimer composed of an alpha subunit (CarB2) and a beta subunit (CarC2). Requires a divalent metal cation as cofactor.

The catalysed reaction is 3''-dehydroorientin = 1,5-anhydro-D-erythro-hex-1-en-3-ulose + luteolin. Activity is strongly reduced in the presence of chelating agents. Functionally, carbon-carbon bond-cleaving enzyme which participates in the metabolism of C-glycosides. Acts on the C8-glycosylated compound 3''-dehydroorientin (3''-oxo-orientin). The sequence is that of C-glycoside deglycosidase alpha subunit from Arthrobacter globiformis (strain ATCC 8010 / DSM 20124 / JCM 1332 / NBRC 12137 / NCIMB 8907 / NRRL B-2979 / 168).